The following is a 60-amino-acid chain: uncharacterized protein (60 aa).

A helical transmembrane segment spans residues Leu19–Tyr39.

The protein resides in the membrane. This is an uncharacterized protein from Saccharomyces cerevisiae (strain ATCC 204508 / S288c) (Baker's yeast).